The chain runs to 475 residues: F-box protein SKIP22 (475 aa).

Positions 114–133 (DQAKSNPNTSVEDPEGDISG) are disordered. The region spanning 319 to 365 (PPCLMRLPTELKLKILELLPGVSIGNMACVCTEMRYLASDNDLWKQK) is the F-box domain.

Part of a SCF (ASK-cullin-F-box) protein ligase complex. Interacts with SKP1A/ASK1 and SPK1B/ASK2.

Its subcellular location is the nucleus. Its pathway is protein modification; protein ubiquitination. In terms of biological role, component of SCF(ASK-cullin-F-box) E3 ubiquitin ligase complexes, which may mediate the ubiquitination and subsequent proteasomal degradation of target proteins. This chain is F-box protein SKIP22 (SKIP22), found in Arabidopsis thaliana (Mouse-ear cress).